The primary structure comprises 455 residues: Glycylpeptide N-tetradecanoyltransferase (455 aa).

A tetradecanoyl-CoA-binding site is contributed by 38-41 (HKFW). The myristoyl CoA-binding stretch occupies residues 168-204 (INFLCVHKQLRSKRLTPVLIKEITRRVNKCDIWHALY). The Proton acceptor; via carboxylate role is filled by L455.

Belongs to the NMT family. As to quaternary structure, monomer. The N-terminus is blocked.

Its subcellular location is the cytoplasm. It catalyses the reaction N-terminal glycyl-[protein] + tetradecanoyl-CoA = N-tetradecanoylglycyl-[protein] + CoA + H(+). With respect to regulation, inhibited by diethylpyrocarbonate. Competitively inhibited by S-(2-oxo)pentadecyl-CoA, a non hydrolysable myristoyl-CoA analog, and by SC-58272, a peptidomimetic derived from the N-terminal sequence of a natural substrate. Its function is as follows. Adds a myristoyl group to the N-terminal glycine residue of certain cellular proteins. Substrate specificity requires an N-terminal glycine in the nascent polypeptide substrates. Uncharged amino acids are preferred at position 2 while neutral residues are favored at positions 3 and 4. Ser is present at position 5 in almost all known N-myristoyl proteins and Lys is commonly encountered at postion 6. In Saccharomyces cerevisiae (strain ATCC 204508 / S288c) (Baker's yeast), this protein is Glycylpeptide N-tetradecanoyltransferase (NMT1).